The primary structure comprises 556 residues: ATP synthase subunit beta-1, mitochondrial (556 aa).

The segment covering 1-20 (MASRRVLSSLLRSSSGRSAA) has biased composition (low complexity). A disordered region spans residues 1–37 (MASRRVLSSLLRSSSGRSAAKLGNRNPRLPSPSPARH). Residues 1-51 (MASRRVLSSLLRSSSGRSAAKLGNRNPRLPSPSPARHAAPCSYLLGRVAEY) constitute a mitochondrion transit peptide. The residue at position 59 (serine 59) is a Phosphoserine. Residue 231–238 (GGAGVGKT) coordinates ATP.

It belongs to the ATPase alpha/beta chains family. In terms of assembly, F-type ATPases have 2 components, CF(1) - the catalytic core - and CF(0) - the membrane proton channel. CF(1) has five subunits: alpha(3), beta(3), gamma(1), delta(1), epsilon(1). CF(0) has three main subunits: a, b and c.

The protein resides in the mitochondrion. Its subcellular location is the mitochondrion inner membrane. The catalysed reaction is ATP + H2O + 4 H(+)(in) = ADP + phosphate + 5 H(+)(out). In terms of biological role, mitochondrial membrane ATP synthase (F(1)F(0) ATP synthase or Complex V) produces ATP from ADP in the presence of a proton gradient across the membrane which is generated by electron transport complexes of the respiratory chain. F-type ATPases consist of two structural domains, F(1) - containing the extramembraneous catalytic core, and F(0) - containing the membrane proton channel, linked together by a central stalk and a peripheral stalk. During catalysis, ATP synthesis in the catalytic domain of F(1) is coupled via a rotary mechanism of the central stalk subunits to proton translocation. Subunits alpha and beta form the catalytic core in F(1). Rotation of the central stalk against the surrounding alpha(3)beta(3) subunits leads to hydrolysis of ATP in three separate catalytic sites on the beta subunits. The sequence is that of ATP synthase subunit beta-1, mitochondrial from Arabidopsis thaliana (Mouse-ear cress).